Consider the following 388-residue polypeptide: Succinate--CoA ligase [ADP-forming] subunit beta (388 aa).

The 236-residue stretch at 9 to 244 folds into the ATP-grasp domain; the sequence is KALFAEYGLP…PSQDDAREAH (236 aa). ATP contacts are provided by residues lysine 46, 53 to 55, glutamate 99, threonine 102, and glutamate 107; that span reads GRG. Mg(2+) contacts are provided by asparagine 199 and aspartate 213. Residues asparagine 264 and 321–323 contribute to the substrate site; that span reads GIV.

The protein belongs to the succinate/malate CoA ligase beta subunit family. As to quaternary structure, heterotetramer of two alpha and two beta subunits. Mg(2+) serves as cofactor.

The enzyme catalyses succinate + ATP + CoA = succinyl-CoA + ADP + phosphate. The catalysed reaction is GTP + succinate + CoA = succinyl-CoA + GDP + phosphate. Its pathway is carbohydrate metabolism; tricarboxylic acid cycle; succinate from succinyl-CoA (ligase route): step 1/1. In terms of biological role, succinyl-CoA synthetase functions in the citric acid cycle (TCA), coupling the hydrolysis of succinyl-CoA to the synthesis of either ATP or GTP and thus represents the only step of substrate-level phosphorylation in the TCA. The beta subunit provides nucleotide specificity of the enzyme and binds the substrate succinate, while the binding sites for coenzyme A and phosphate are found in the alpha subunit. The sequence is that of Succinate--CoA ligase [ADP-forming] subunit beta from Shewanella sediminis (strain HAW-EB3).